The chain runs to 208 residues: Uracil phosphoribosyltransferase (208 aa).

Residues arginine 78, arginine 103, and 130–138 (DPMLATGGS) each bind 5-phospho-alpha-D-ribose 1-diphosphate. Uracil contacts are provided by residues isoleucine 193 and 198–200 (GDA). Aspartate 199 contacts 5-phospho-alpha-D-ribose 1-diphosphate.

It belongs to the UPRTase family. Mg(2+) is required as a cofactor.

It carries out the reaction UMP + diphosphate = 5-phospho-alpha-D-ribose 1-diphosphate + uracil. The protein operates within pyrimidine metabolism; UMP biosynthesis via salvage pathway; UMP from uracil: step 1/1. With respect to regulation, allosterically activated by GTP. Functionally, catalyzes the conversion of uracil and 5-phospho-alpha-D-ribose 1-diphosphate (PRPP) to UMP and diphosphate. This Citrobacter koseri (strain ATCC BAA-895 / CDC 4225-83 / SGSC4696) protein is Uracil phosphoribosyltransferase.